The sequence spans 318 residues: Myoblast determination protein 1 (318 aa).

Residue Met-1 forms a Peptide (Met-Gly) (interchain with G-Cter in ubiquitin) linkage. An N6-methyllysine; by EHMT2 modification is found at Lys-104. The bHLH domain occupies Asp-109–Leu-160. Disordered regions lie at residues Ala-175 to Tyr-225 and Ala-265 to Leu-318. Residues Ser-196–Ser-206 are compositionally biased toward polar residues. A compositionally biased stretch (low complexity) spans Ala-265–Pro-274. 2 stretches are compositionally biased toward polar residues: residues Leu-287 to Ser-298 and Ala-307 to Leu-318.

Interacts with SUV39H1. Efficient DNA binding requires dimerization with another bHLH protein. Seems to form active heterodimers with ITF-2. Interacts with DDX5. Interacts with CHD2. Interacts with TSC22D3 isoform 1 and isoform 4. Interacts with SETD3. Interacts with P-TEFB complex; promotes the transcriptional activity of MYOD1 through its CDK9-mediated phosphorylation. Interacts with CSRP3. Interacts with NUPR1. In terms of processing, acetylated by a complex containing EP300 and PCAF. The acetylation is essential to activate target genes. Conversely, its deacetylation by SIRT1 inhibits its function. Post-translationally, ubiquitinated on the N-terminus; which is required for proteasomal degradation. Phosphorylated by CDK9. This phosphorylation promotes its function in muscle differentiation. In terms of processing, methylation at Lys-104 by EHMT2/G9a inhibits myogenic activity.

The protein localises to the nucleus. Acts as a transcriptional activator that promotes transcription of muscle-specific target genes and plays a role in muscle differentiation. Together with MYF5 and MYOG, co-occupies muscle-specific gene promoter core region during myogenesis. Induces fibroblasts to differentiate into myoblasts. Interacts with and is inhibited by the twist protein. This interaction probably involves the basic domains of both proteins. The sequence is that of Myoblast determination protein 1 (Myod1) from Mus musculus (Mouse).